We begin with the raw amino-acid sequence, 426 residues long: Tryptophan--tRNA ligase (426 aa).

The 'HIGH' region signature appears at 66 to 74; sequence PSGEMHLGN. The 'KMSKS' region motif lies at 314–318; the sequence is KMSSS.

Belongs to the class-I aminoacyl-tRNA synthetase family.

The protein localises to the cytoplasm. The catalysed reaction is tRNA(Trp) + L-tryptophan + ATP = L-tryptophyl-tRNA(Trp) + AMP + diphosphate + H(+). This is Tryptophan--tRNA ligase from Thermoplasma acidophilum (strain ATCC 25905 / DSM 1728 / JCM 9062 / NBRC 15155 / AMRC-C165).